A 779-amino-acid polypeptide reads, in one-letter code: Phosphoribosylformylglycinamidine synthase subunit PurL (779 aa).

His-52 is a catalytic residue. Residues Tyr-55 and Lys-94 each coordinate ATP. Residue Glu-96 participates in Mg(2+) binding. Substrate is bound by residues 97–100 (SHNH) and Arg-119. Residue His-98 is the Proton acceptor of the active site. Position 120 (Asp-120) interacts with Mg(2+). Substrate is bound at residue Gln-243. Position 271 (Asp-271) interacts with Mg(2+). Position 315-317 (315-317 (ESQ)) interacts with substrate. The ATP site is built by Asn-523 and Gly-560. Asn-561 contacts Mg(2+). Ser-563 contributes to the substrate binding site.

The protein belongs to the FGAMS family. Monomer. Part of the FGAM synthase complex composed of 1 PurL, 1 PurQ and 2 PurS subunits.

It is found in the cytoplasm. It carries out the reaction N(2)-formyl-N(1)-(5-phospho-beta-D-ribosyl)glycinamide + L-glutamine + ATP + H2O = 2-formamido-N(1)-(5-O-phospho-beta-D-ribosyl)acetamidine + L-glutamate + ADP + phosphate + H(+). It functions in the pathway purine metabolism; IMP biosynthesis via de novo pathway; 5-amino-1-(5-phospho-D-ribosyl)imidazole from N(2)-formyl-N(1)-(5-phospho-D-ribosyl)glycinamide: step 1/2. Functionally, part of the phosphoribosylformylglycinamidine synthase complex involved in the purines biosynthetic pathway. Catalyzes the ATP-dependent conversion of formylglycinamide ribonucleotide (FGAR) and glutamine to yield formylglycinamidine ribonucleotide (FGAM) and glutamate. The FGAM synthase complex is composed of three subunits. PurQ produces an ammonia molecule by converting glutamine to glutamate. PurL transfers the ammonia molecule to FGAR to form FGAM in an ATP-dependent manner. PurS interacts with PurQ and PurL and is thought to assist in the transfer of the ammonia molecule from PurQ to PurL. This Prochlorococcus marinus (strain MIT 9215) protein is Phosphoribosylformylglycinamidine synthase subunit PurL.